The following is a 115-amino-acid chain: Holo-[acyl-carrier-protein] synthase (115 aa).

Mg(2+)-binding residues include D5 and E51.

Belongs to the P-Pant transferase superfamily. AcpS family. Mg(2+) serves as cofactor.

The protein localises to the cytoplasm. The enzyme catalyses apo-[ACP] + CoA = holo-[ACP] + adenosine 3',5'-bisphosphate + H(+). In terms of biological role, transfers the 4'-phosphopantetheine moiety from coenzyme A to a Ser of acyl-carrier-protein. This chain is Holo-[acyl-carrier-protein] synthase, found in Helicobacter acinonychis (strain Sheeba).